Consider the following 136-residue polypeptide: 1,4-dihydroxy-2-naphthoyl-CoA hydrolase (136 aa).

The active-site Nucleophile or proton acceptor is the E63. Residues G82, 89–92, and 106–111 contribute to the substrate site; these read HVRS and HLGSRH.

This sequence belongs to the thioesterase PaaI family. As to quaternary structure, homotetramer. Dimer of dimers.

It catalyses the reaction 1,4-dihydroxy-2-naphthoyl-CoA + H2O = 1,4-dihydroxy-2-naphthoate + CoA + H(+). It participates in quinol/quinone metabolism; 1,4-dihydroxy-2-naphthoate biosynthesis; 1,4-dihydroxy-2-naphthoate from chorismate: step 7/7. The protein operates within quinol/quinone metabolism; menaquinone biosynthesis. Catalyzes the hydrolysis of 1,4-dihydroxy-2-naphthoyl-CoA (DHNA-CoA) to 1,4-dihydroxy-2-naphthoate (DHNA). Also shows significant activity toward a wide range of acyl-CoA thioesters, and minimal activity toward benzoyl-holoEntB. This is 1,4-dihydroxy-2-naphthoyl-CoA hydrolase from Escherichia coli (strain K12).